A 196-amino-acid polypeptide reads, in one-letter code: Gastrula zinc finger protein xLCGF3.1 (196 aa).

7 C2H2-type zinc fingers span residues 6–28 (FMCT…HMTH), 34–56 (FTCT…QTIH), 62–84 (FTCI…YMTH), 90–112 (FTCT…QTMH), 118–140 (LTCT…QRVH), 146–168 (FTCT…QTVH), and 174–196 (FTCT…QIVH).

The protein belongs to the krueppel C2H2-type zinc-finger protein family.

Its subcellular location is the nucleus. Its function is as follows. May be involved in transcriptional regulation. In Xenopus laevis (African clawed frog), this protein is Gastrula zinc finger protein xLCGF3.1.